Consider the following 164-residue polypeptide: MERFLENVMYASRWLLAPVYFGLSLALIALALKFFQEILHVLPNVFALAEADLILVLLSLVDMTLVGGLLVMVMFSGYENFVSQLDISAGKEKLNWLGKMDATSLKNKVAASIVAISSIHLLRVFMDARNVPDNKLMWYVIIHLTFVLSAFVMGYLDRLTRHNH.

3 consecutive transmembrane segments (helical) span residues 10 to 32 (YASRWLLAPVYFGLSLALIALAL), 53 to 75 (LILVLLSLVDMTLVGGLLVMVMF), and 136 to 155 (LMWYVIIHLTFVLSAFVMGY).

It belongs to the UPF0114 family.

Its subcellular location is the cell membrane. The sequence is that of UPF0114 protein YqhA from Salmonella typhi.